Consider the following 423-residue polypeptide: Histidine--tRNA ligase (423 aa).

The protein belongs to the class-II aminoacyl-tRNA synthetase family. Homodimer.

Its subcellular location is the cytoplasm. The catalysed reaction is tRNA(His) + L-histidine + ATP = L-histidyl-tRNA(His) + AMP + diphosphate + H(+). This chain is Histidine--tRNA ligase, found in Laribacter hongkongensis (strain HLHK9).